The primary structure comprises 599 residues: Elongation factor 4 (599 aa).

One can recognise a tr-type G domain in the interval 2–184; that stretch reads KNIRNFSIIA…RLVRDIPPPE (183 aa). Residues 14–19 and 131–134 each bind GTP; these read DHGKST and NKID.

It belongs to the TRAFAC class translation factor GTPase superfamily. Classic translation factor GTPase family. LepA subfamily.

It is found in the cell inner membrane. The catalysed reaction is GTP + H2O = GDP + phosphate + H(+). Required for accurate and efficient protein synthesis under certain stress conditions. May act as a fidelity factor of the translation reaction, by catalyzing a one-codon backward translocation of tRNAs on improperly translocated ribosomes. Back-translocation proceeds from a post-translocation (POST) complex to a pre-translocation (PRE) complex, thus giving elongation factor G a second chance to translocate the tRNAs correctly. Binds to ribosomes in a GTP-dependent manner. The chain is Elongation factor 4 from Escherichia coli O8 (strain IAI1).